The sequence spans 349 residues: MGEEKYLPELMAEKDSLDPSFVHASRLLAEEIEKFQGSDGKKEDEEKKYLDVISNKNIKLSERVLIPVKQYPKFNFVGKLLGPRGNSLKRLQEETGAKMSILGKGSMRDKTKEEELRKSGEAKYAHLSDELHVLIEVFAPPGEAYSRMSHALEEIKKFLVPDYNDEIRQEQLRELSYLNGSEESGRGRGIRGRGIRITPTAPSRGRGGAVPPPPPPGRGVLTPRGTTVTRGALPVPPIARGVPTPRARGTAAVPGYRAPPPPAHDAYEEYGYDDGYGGEYDDQTYEAYDNSYVTPTQSVPEYYDYGHGVNEDAYDSYAPEEWATTRSSLKAPPPRSARGGYREHPYGRY.

A KH domain is found at 65–135; the sequence is LIPVKQYPKF…HLSDELHVLI (71 aa). 2 disordered regions span residues 181-263 and 321-349; these read SEES…PPPA and EWAT…YGRY. Residues 218-231 show a composition bias toward low complexity; sequence RGVLTPRGTTVTRG. Omega-N-methylarginine is present on residues R230 and R240. The segment covering 340 to 349 has biased composition (basic and acidic residues); the sequence is GYREHPYGRY.

The protein belongs to the KHDRBS family. In terms of assembly, self-associates to form homooligomers. Interacts with KHDRBS1/SAM68; heterooligomer formation of KHDRBS family proteins may modulate RNA substrate specificity. Interacts with RBMX, SAFB, SFRS9 and YTHDC1. Interacts with FYN and PLCG1 (via SH3 domain). Interacts (phosphorylated) with FYN, GRB2, PLCG1 and RASA1 (via SH2 domain). In terms of processing, methylated. Tyrosine phosphorylated by FYN, PTK6 and SRC. Tyrosine phosphorylated by SRC during mitosis. As to expression, expressed in heart, skin, brain, colon, spleen, kidney, cervix and testis. In adult cerebellum expressed predominantly in Purkinje cells and in the hippocampus is abundantly expressed in glutamatergic dentate granule cells and in specific inhibitory Schaffer collateral-associated and path-associated interneurons; expression is restricted to neuronal subpopulations largely non-overlapping with expression of KHDRBS3/SLM-2 (at protein level).

The protein resides in the nucleus. Its function is as follows. RNA-binding protein that plays a role in the regulation of alternative splicing and influences mRNA splice site selection and exon inclusion. Binds both poly(A) and poly(U) homopolymers. Phosphorylation by PTK6 inhibits its RNA-binding ability. Induces an increased concentration-dependent incorporation of exon in CD44 pre-mRNA by direct binding to purine-rich exonic enhancer. Can regulate alternative splicing of neurexins NRXN1-3 in the laminin G-like domain 6 containing the evolutionary conserved neurexin alternative spliced segment 4 (AS4) involved in neurexin selective targeting to postsynaptic partners. Regulates cell-type specific alternative splicing of NRXN1 at AS4 and acts synergystically with SAM68 in exon skipping. In contrast acts antagonistically with SAM68 in NRXN3 exon skipping at AS4. Its phosphorylation by FYN inhibits its ability to regulate splice site selection. May function as an adapter protein for Src kinases during mitosis. This Mus musculus (Mouse) protein is KH domain-containing, RNA-binding, signal transduction-associated protein 2 (Khdrbs2).